A 303-amino-acid polypeptide reads, in one-letter code: Proteasome subunit beta (303 aa).

Positions 1 to 67 (MTWQFPDRLS…SGGTGQLPHG (67 aa)) are cleaved as a propeptide — removed in mature form; by autocatalysis. Catalysis depends on T68, which acts as the Nucleophile.

The protein belongs to the peptidase T1B family. In terms of assembly, the 20S proteasome core is composed of 14 alpha and 14 beta subunits that assemble into four stacked heptameric rings, resulting in a barrel-shaped structure. The two inner rings, each composed of seven catalytic beta subunits, are sandwiched by two outer rings, each composed of seven alpha subunits. The catalytic chamber with the active sites is on the inside of the barrel. Has a gated structure, the ends of the cylinder being occluded by the N-termini of the alpha-subunits. Is capped by the proteasome-associated ATPase, ARC.

The protein resides in the cytoplasm. It catalyses the reaction Cleavage of peptide bonds with very broad specificity.. It functions in the pathway protein degradation; proteasomal Pup-dependent pathway. Its activity is regulated as follows. The formation of the proteasomal ATPase ARC-20S proteasome complex, likely via the docking of the C-termini of ARC into the intersubunit pockets in the alpha-rings, may trigger opening of the gate for substrate entry. Interconversion between the open-gate and close-gate conformations leads to a dynamic regulation of the 20S proteasome proteolysis activity. Component of the proteasome core, a large protease complex with broad specificity involved in protein degradation. The chain is Proteasome subunit beta from Mycolicibacterium paratuberculosis (strain ATCC BAA-968 / K-10) (Mycobacterium paratuberculosis).